The following is a 551-amino-acid chain: Arginine--tRNA ligase (551 aa).

The 'HIGH' region signature appears at 125 to 135; the sequence is ANPTGPLHIGH.

This sequence belongs to the class-I aminoacyl-tRNA synthetase family. In terms of assembly, monomer.

Its subcellular location is the cytoplasm. It catalyses the reaction tRNA(Arg) + L-arginine + ATP = L-arginyl-tRNA(Arg) + AMP + diphosphate. In Nitratidesulfovibrio vulgaris (strain DSM 19637 / Miyazaki F) (Desulfovibrio vulgaris), this protein is Arginine--tRNA ligase.